Here is a 326-residue protein sequence, read N- to C-terminus: UDP-3-O-acylglucosamine N-acyltransferase (326 aa).

Residue H225 is the Proton acceptor of the active site.

The protein belongs to the transferase hexapeptide repeat family. LpxD subfamily. Homotrimer.

It carries out the reaction a UDP-3-O-[(3R)-3-hydroxyacyl]-alpha-D-glucosamine + a (3R)-hydroxyacyl-[ACP] = a UDP-2-N,3-O-bis[(3R)-3-hydroxyacyl]-alpha-D-glucosamine + holo-[ACP] + H(+). It functions in the pathway bacterial outer membrane biogenesis; LPS lipid A biosynthesis. Its function is as follows. Catalyzes the N-acylation of UDP-3-O-acylglucosamine using 3-hydroxyacyl-ACP as the acyl donor. Is involved in the biosynthesis of lipid A, a phosphorylated glycolipid that anchors the lipopolysaccharide to the outer membrane of the cell. This chain is UDP-3-O-acylglucosamine N-acyltransferase, found in Verminephrobacter eiseniae (strain EF01-2).